The sequence spans 252 residues: Pyridoxine 5'-phosphate synthase (252 aa).

Positions 8 and 19 each coordinate 3-amino-2-oxopropyl phosphate. The active-site Proton acceptor is the H44. 2 residues coordinate 1-deoxy-D-xylulose 5-phosphate: R46 and H51. Residue E75 is the Proton acceptor of the active site. T110 contacts 1-deoxy-D-xylulose 5-phosphate. Catalysis depends on H201, which acts as the Proton donor. 3-amino-2-oxopropyl phosphate-binding positions include D202 and G224–H225.

Belongs to the PNP synthase family. Homooctamer; tetramer of dimers.

It is found in the cytoplasm. It carries out the reaction 3-amino-2-oxopropyl phosphate + 1-deoxy-D-xylulose 5-phosphate = pyridoxine 5'-phosphate + phosphate + 2 H2O + H(+). It participates in cofactor biosynthesis; pyridoxine 5'-phosphate biosynthesis; pyridoxine 5'-phosphate from D-erythrose 4-phosphate: step 5/5. In terms of biological role, catalyzes the complicated ring closure reaction between the two acyclic compounds 1-deoxy-D-xylulose-5-phosphate (DXP) and 3-amino-2-oxopropyl phosphate (1-amino-acetone-3-phosphate or AAP) to form pyridoxine 5'-phosphate (PNP) and inorganic phosphate. This is Pyridoxine 5'-phosphate synthase from Albidiferax ferrireducens (strain ATCC BAA-621 / DSM 15236 / T118) (Rhodoferax ferrireducens).